We begin with the raw amino-acid sequence, 255 residues long: Acetylglutamate kinase (255 aa).

Substrate contacts are provided by residues 40–41 (GG), R62, and N153.

This sequence belongs to the acetylglutamate kinase family. ArgB subfamily.

It is found in the cytoplasm. The catalysed reaction is N-acetyl-L-glutamate + ATP = N-acetyl-L-glutamyl 5-phosphate + ADP. It participates in amino-acid biosynthesis; L-arginine biosynthesis; N(2)-acetyl-L-ornithine from L-glutamate: step 2/4. Its function is as follows. Catalyzes the ATP-dependent phosphorylation of N-acetyl-L-glutamate. This chain is Acetylglutamate kinase, found in Bacillus cereus (strain 03BB102).